Consider the following 352-residue polypeptide: tRNA (guanine(26)-N(2))-dimethyltransferase (352 aa).

The 347-residue stretch at 4–350 (ILNKEGAVEF…ANYDEIARIL (347 aa)) folds into the Trm1 methyltransferase domain. S-adenosyl-L-methionine contacts are provided by Arg39, Arg65, Asp83, Asp109, and Ala110.

This sequence belongs to the class I-like SAM-binding methyltransferase superfamily. Trm1 family.

It catalyses the reaction guanosine(26) in tRNA + 2 S-adenosyl-L-methionine = N(2)-dimethylguanosine(26) in tRNA + 2 S-adenosyl-L-homocysteine + 2 H(+). Its function is as follows. Dimethylates a single guanine residue at position 26 of a number of tRNAs using S-adenosyl-L-methionine as donor of the methyl groups. The sequence is that of tRNA (guanine(26)-N(2))-dimethyltransferase from Pyrobaculum islandicum (strain DSM 4184 / JCM 9189 / GEO3).